Consider the following 177-residue polypeptide: Large ribosomal subunit protein uL6 (177 aa).

The protein belongs to the universal ribosomal protein uL6 family. Part of the 50S ribosomal subunit.

This protein binds to the 23S rRNA, and is important in its secondary structure. It is located near the subunit interface in the base of the L7/L12 stalk, and near the tRNA binding site of the peptidyltransferase center. This Xanthobacter autotrophicus (strain ATCC BAA-1158 / Py2) protein is Large ribosomal subunit protein uL6.